A 198-amino-acid polypeptide reads, in one-letter code: 7-methyl-GTP pyrophosphatase (198 aa).

Asp-75 (proton acceptor) is an active-site residue.

Belongs to the Maf family. YceF subfamily. A divalent metal cation is required as a cofactor.

It is found in the cytoplasm. It catalyses the reaction N(7)-methyl-GTP + H2O = N(7)-methyl-GMP + diphosphate + H(+). Nucleoside triphosphate pyrophosphatase that hydrolyzes 7-methyl-GTP (m(7)GTP). May have a dual role in cell division arrest and in preventing the incorporation of modified nucleotides into cellular nucleic acids. The sequence is that of 7-methyl-GTP pyrophosphatase from Nitrosospira multiformis (strain ATCC 25196 / NCIMB 11849 / C 71).